The sequence spans 490 residues: Bifunctional protein GlmU (490 aa).

The segment at 1-241 (MSSPGDTAVL…SALVAGVNNR (241 aa)) is pyrophosphorylase. UDP-N-acetyl-alpha-D-glucosamine contacts are provided by residues 12–15 (LAAG), lysine 26, glutamine 83, 88–89 (GT), 112–114 (SGD), glycine 151, glutamate 166, asparagine 181, and asparagine 239. Aspartate 114 is a binding site for Mg(2+). Asparagine 239 is a Mg(2+) binding site. Residues 242–262 (VQLAQLGAELNRRIVAAHQLA) are linker. Residues 263–490 (GVTVVDPATT…AGGRPAGEAE (228 aa)) are N-acetyltransferase. 2 residues coordinate UDP-N-acetyl-alpha-D-glucosamine: arginine 344 and lysine 362. Histidine 374 acts as the Proton acceptor in catalysis. Tyrosine 377 and asparagine 388 together coordinate UDP-N-acetyl-alpha-D-glucosamine. Residues alanine 391, 397–398 (NY), serine 416, and alanine 434 each bind acetyl-CoA. Positions 462-490 (RRKRPGSAAARAAEAAEKAAGGRPAGEAE) are disordered. Over residues 467–490 (GSAAARAAEAAEKAAGGRPAGEAE) the composition is skewed to low complexity.

It in the N-terminal section; belongs to the N-acetylglucosamine-1-phosphate uridyltransferase family. This sequence in the C-terminal section; belongs to the transferase hexapeptide repeat family. In terms of assembly, homotrimer. The cofactor is Mg(2+).

It is found in the cytoplasm. The enzyme catalyses alpha-D-glucosamine 1-phosphate + acetyl-CoA = N-acetyl-alpha-D-glucosamine 1-phosphate + CoA + H(+). It carries out the reaction N-acetyl-alpha-D-glucosamine 1-phosphate + UTP + H(+) = UDP-N-acetyl-alpha-D-glucosamine + diphosphate. The protein operates within nucleotide-sugar biosynthesis; UDP-N-acetyl-alpha-D-glucosamine biosynthesis; N-acetyl-alpha-D-glucosamine 1-phosphate from alpha-D-glucosamine 6-phosphate (route II): step 2/2. It participates in nucleotide-sugar biosynthesis; UDP-N-acetyl-alpha-D-glucosamine biosynthesis; UDP-N-acetyl-alpha-D-glucosamine from N-acetyl-alpha-D-glucosamine 1-phosphate: step 1/1. It functions in the pathway bacterial outer membrane biogenesis; LPS lipid A biosynthesis. Functionally, catalyzes the last two sequential reactions in the de novo biosynthetic pathway for UDP-N-acetylglucosamine (UDP-GlcNAc). The C-terminal domain catalyzes the transfer of acetyl group from acetyl coenzyme A to glucosamine-1-phosphate (GlcN-1-P) to produce N-acetylglucosamine-1-phosphate (GlcNAc-1-P), which is converted into UDP-GlcNAc by the transfer of uridine 5-monophosphate (from uridine 5-triphosphate), a reaction catalyzed by the N-terminal domain. The chain is Bifunctional protein GlmU from Mycobacterium avium (strain 104).